A 116-amino-acid chain; its full sequence is Large ribosomal subunit protein uL22c (116 aa).

The protein belongs to the universal ribosomal protein uL22 family. In terms of assembly, part of the 50S ribosomal subunit.

It is found in the plastid. It localises to the chloroplast. Its function is as follows. This protein binds specifically to 23S rRNA. In terms of biological role, the globular domain of the protein is located near the polypeptide exit tunnel on the outside of the subunit, while an extended beta-hairpin is found that lines the wall of the exit tunnel in the center of the 70S ribosome. This is Large ribosomal subunit protein uL22c (rpl22) from Porphyra purpurea (Red seaweed).